We begin with the raw amino-acid sequence, 301 residues long: tRNA uridine(34) hydroxylase (301 aa).

The Rhodanese domain maps to 121–212 (NDKDTLVLDS…YLKNIKKKES (92 aa)). The active-site Cysteine persulfide intermediate is the C172.

Belongs to the TrhO family.

It carries out the reaction uridine(34) in tRNA + AH2 + O2 = 5-hydroxyuridine(34) in tRNA + A + H2O. Functionally, catalyzes oxygen-dependent 5-hydroxyuridine (ho5U) modification at position 34 in tRNAs. The polypeptide is tRNA uridine(34) hydroxylase (Pelagibacter ubique (strain HTCC1062)).